The primary structure comprises 239 residues: DNA repair protein RecO (239 aa).

This sequence belongs to the RecO family.

In terms of biological role, involved in DNA repair and RecF pathway recombination. The chain is DNA repair protein RecO from Christiangramia forsetii (strain DSM 17595 / CGMCC 1.15422 / KT0803) (Gramella forsetii).